Here is a 102-residue protein sequence, read N- to C-terminus: uncharacterized protein (102 aa).

The next 2 membrane-spanning stretches (helical) occupy residues 24–44 (AFIV…PVLT) and 55–75 (IGAV…TWIL).

The protein resides in the cell membrane. This is an uncharacterized protein from Bacillus subtilis (strain 168).